The chain runs to 406 residues: Kelch domain-containing protein 2 (406 aa).

Kelch repeat units follow at residues 31-85 (ERSG…NTEG), 92-136 (SGSC…ERID), 148-207 (LGVW…AWSQ), 221-259 (HACA…NELI), 271-311 (HSLT…IQFN), and 322-359 (HTAC…IFSV).

Component of a CRL2(KLHDC2) E3 ubiquitin-protein ligase complex, also named ECS(KLHDC2) complex, composed of CUL2, Elongin BC (ELOB and ELOC), RBX1 and substrate-specific adapter KLHDC2. May form oligomers as a KLHDC2-ELOB-ELOC complex; this interaction is autoinhibitory for the E3 ligase complex as the substrate-binding site of KLHDC2 is blocked in the oligomer. Interacts with CREB3; interaction is direct and specific as it does not interact with CREB1, ATF4, ATF6, JUN, FOS, CEBPA or herpes simplex virus transactivator VP16. In terms of processing, autoubiquitinated by the CRL2(KLHDC2) E3 ligase complex.

It is found in the nucleus. It functions in the pathway protein modification; protein ubiquitination. Its function is as follows. Substrate-recognition component of a Cul2-RING (CRL2) E3 ubiquitin-protein ligase complex of the DesCEND (destruction via C-end degrons) pathway, which recognizes a C-degron located at the extreme C terminus of target proteins, leading to their ubiquitination and degradation. The C-degron recognized by the DesCEND pathway is usually a motif of less than ten residues and can be present in full-length proteins, truncated proteins or proteolytically cleaved forms. The CRL2(KLHDC2) complex specifically recognizes proteins with a diglycine (Gly-Gly) at the C-terminus, leading to their ubiquitination and degradation. The CRL2(KLHDC2) complex mediates ubiquitination and degradation of truncated SELENOK and SELENOS selenoproteins produced by failed UGA/Sec decoding, which end with a diglycine. The CRL2(KLHDC2) complex also recognizes proteolytically cleaved proteins ending with Gly-Gly, such as the N-terminal fragment of USP1, leading to their degradation. May also act as an indirect repressor of CREB3-mediated transcription by interfering with CREB3-DNA-binding. The polypeptide is Kelch domain-containing protein 2 (Rattus norvegicus (Rat)).